A 436-amino-acid chain; its full sequence is Envelope glycoprotein (436 aa).

Methionine 1 is a signal peptide. Residues 2–436 (ANPSPHQIYN…GGLTVGGIAA (435 aa)) are Extracellular-facing. N-linked (GlcNAc...) asparagine; by host glycans are attached at residues asparagine 11 and asparagine 26. Intrachain disulfides connect cysteine 95–cysteine 117 and cysteine 109–cysteine 122. The interval 203-255 (PPQAMGPNLVLPDQKPPSRQSQTGSKVATQRPQTNESAPRSVGPTTMGPKRIG) is disordered. Polar residues predominate over residues 219-240 (PSRQSQTGSKVATQRPQTNESA). N-linked (GlcNAc...) asparagine; by host glycans are attached at residues asparagine 237, asparagine 272, and asparagine 277. The CXXC motif lies at 282 to 285 (CWLC). N-linked (GlcNAc...) asparagine; by host glycans are attached at residues asparagine 304, asparagine 344, asparagine 360, and asparagine 380.

In terms of assembly, the mature envelope protein (Env) consists of a trimer of SU-TM heterodimers attached by a labile interchain disulfide bond. Post-translationally, specific enzymatic cleavages in vivo yield mature proteins. Envelope glycoproteins are synthesized as an inactive precursor that is N-glycosylated and processed likely by host cell furin or by a furin-like protease in the Golgi to yield the mature SU and TM proteins. The cleavage site between SU and TM requires the minimal sequence [KR]-X-[KR]-R.

The protein localises to the virion membrane. It is found in the host cell membrane. Functionally, the surface protein (SU) attaches the virus to the host cell by binding to its receptor. This interaction triggers the refolding of the transmembrane protein (TM) and is thought to activate its fusogenic potential by unmasking its fusion peptide. Fusion occurs at the host cell plasma membrane. In terms of biological role, the transmembrane protein (TM) acts as a class I viral fusion protein. Under the current model, the protein has at least 3 conformational states: pre-fusion native state, pre-hairpin intermediate state, and post-fusion hairpin state. During viral and target cell membrane fusion, the coiled coil regions (heptad repeats) assume a trimer-of-hairpins structure, positioning the fusion peptide in close proximity to the C-terminal region of the ectodomain. The formation of this structure appears to drive apposition and subsequent fusion of viral and target cell membranes. Membranes fusion leads to delivery of the nucleocapsid into the cytoplasm. The sequence is that of Envelope glycoprotein from Feline leukemia virus (strain C/FS246).